A 226-amino-acid chain; its full sequence is tRNA (guanine-N(7)-)-methyltransferase (226 aa).

Residues 1–22 are disordered; the sequence is MTTPQQPHGPLRSFGRLKSRPV. The S-adenosyl-L-methionine site is built by Glu-59, Glu-84, Asp-111, and Asp-133. The active site involves Asp-133. A substrate-binding site is contributed by Lys-137. Residues 139 to 144 are interaction with RNA; the sequence is RHNKRR. Substrate contacts are provided by residues Asp-169 and 206–209; that span reads TRYE.

It belongs to the class I-like SAM-binding methyltransferase superfamily. TrmB family.

It carries out the reaction guanosine(46) in tRNA + S-adenosyl-L-methionine = N(7)-methylguanosine(46) in tRNA + S-adenosyl-L-homocysteine. It participates in tRNA modification; N(7)-methylguanine-tRNA biosynthesis. In terms of biological role, catalyzes the formation of N(7)-methylguanine at position 46 (m7G46) in tRNA. The chain is tRNA (guanine-N(7)-)-methyltransferase from Caulobacter vibrioides (strain ATCC 19089 / CIP 103742 / CB 15) (Caulobacter crescentus).